Consider the following 258-residue polypeptide: Adenylate kinase (258 aa).

Residue 52–57 (GAGKGT) participates in ATP binding. The NMP stretch occupies residues 72 to 101 (ATGDMLRSQVAKKTALGKEAKKIMDQGGLV). AMP contacts are provided by residues T73, R78, 99–101 (GLV), 128–131 (GFPR), and Q135. The segment at 169 to 206 (GRLVHPASGRSYHKIFNPPKEEMKDDVTGEPLIQRSDD) is LID. ATP is bound by residues R170 and 179-180 (SY). The AMP site is built by R203 and R214. Q242 is a binding site for ATP.

Belongs to the adenylate kinase family. AK2 subfamily. As to quaternary structure, monomer.

The protein localises to the cytoplasm. It localises to the cytosol. Its subcellular location is the mitochondrion intermembrane space. It catalyses the reaction AMP + ATP = 2 ADP. Functionally, catalyzes the reversible transfer of the terminal phosphate group between ATP and AMP. Plays an important role in cellular energy homeostasis and in adenine nucleotide metabolism. Adenylate kinase activity is critical for regulation of the phosphate utilization and the AMP de novo biosynthesis pathways. This is Adenylate kinase (adk1) from Aspergillus niger (strain ATCC MYA-4892 / CBS 513.88 / FGSC A1513).